A 447-amino-acid polypeptide reads, in one-letter code: Cytochrome P450 BJ-4 homolog (447 aa).

Cysteine 392 is a heme binding site.

The protein belongs to the cytochrome P450 family. The cofactor is heme.

In terms of biological role, cytochromes P450 are a group of heme-thiolate monooxygenases. They oxidize a variety of structurally unrelated compounds, including steroids, fatty acids, and xenobiotics. The polypeptide is Cytochrome P450 BJ-4 homolog (cyp117A2) (Sinorhizobium fredii (strain NBRC 101917 / NGR234)).